The sequence spans 452 residues: UDP-N-acetylmuramoylalanine--D-glutamate ligase (452 aa).

Residue 119–125 (GSNGKTT) coordinates ATP.

It belongs to the MurCDEF family.

It is found in the cytoplasm. It catalyses the reaction UDP-N-acetyl-alpha-D-muramoyl-L-alanine + D-glutamate + ATP = UDP-N-acetyl-alpha-D-muramoyl-L-alanyl-D-glutamate + ADP + phosphate + H(+). The protein operates within cell wall biogenesis; peptidoglycan biosynthesis. Its function is as follows. Cell wall formation. Catalyzes the addition of glutamate to the nucleotide precursor UDP-N-acetylmuramoyl-L-alanine (UMA). The polypeptide is UDP-N-acetylmuramoylalanine--D-glutamate ligase (Streptococcus pyogenes serotype M4 (strain MGAS10750)).